The chain runs to 549 residues: MELALALSLIASVAAAPTATLANGDTITGLNAIINEAFLGIPFAEPPVGNLRFKDPVPYSGSLDGQKFTSYGPSCMQQNPEGTYEENLPKAALDLVMQSKVFEAVSPSSEDCLTINVVRPPGTKAGANLPVMLWIFGGGFEVGGTSTFPPAQMITKSIAMGKPIIHVSVNYRVSSWGFLAGDEIKAEGSANAGLKDQRLGMQWVADNIAAFGGDPTKVTIFGESAGSMSVMCHILWNDGDNTYKGKPLFRAGIMQSGAMVPSDAVDGIYGNEIFDLLASNAGCGSASDKLACLRGVSSDTLEDATNNTPGFLAYSSLRLSYLPRPDGVNITDDMYALVREGKYANIPVIIGDQNDEGTFFGTSSLNVTTDAQAREYFKQSFVHASDAEIDTLMTAYPGDITQGSPFDTGILNALTPQFKRISAVLGDLGFTLARRYFLNHYTGGTKYSFLSKQLSGLPVLGTFHSNDIVFQDYLLGSGSLIYNNAFIAFATDLDPNTAGLLVKWPEYTSSSQSGNNLMMINALGLYTGKDNFRTAGYDALFSNPPSFFV.

The signal sequence occupies residues 1–15 (MELALALSLIASVAA). A disulfide bridge links cysteine 75 with cysteine 112. Catalysis depends on serine 224, which acts as the Acyl-ester intermediate. Cysteine 283 and cysteine 292 are disulfide-bonded. An N-linked (GlcNAc...) asparagine glycan is attached at asparagine 329. Glutamate 356 acts as the Charge relay system in catalysis. N-linked (GlcNAc...) asparagine glycosylation occurs at asparagine 366. Residue histidine 464 is the Charge relay system of the active site.

This sequence belongs to the type-B carboxylesterase/lipase family.

It carries out the reaction a triacylglycerol + H2O = a diacylglycerol + a fatty acid + H(+). The sequence is that of Lipase 1 (LIP1) from Diutina rugosa (Yeast).